We begin with the raw amino-acid sequence, 147 residues long: MSNFTAEDKAAITSLWAKVNVEDAGGETLGRLLVVYPWTQRFFDSFGSLSSPSAIMGNPKVKAHGAKVLTSLGEAIKNLDDLKGTFGQLSELHCDKLHVDPENFRLLGNVLVTVLAVHHGKEFTPEVQASWQKMVAGVASALGSRYH.

Positions 3-147 constitute a Globin domain; sequence NFTAEDKAAI…VASALGSRYH (145 aa). Thr13 bears the Phosphothreonine mark. Phosphoserine is present on residues Ser45, Ser51, and Ser53. At Lys60 the chain carries N6-acetyllysine. Residue His64 participates in heme b binding. The residue at position 83 (Lys83) is an N6-acetyllysine. Residue His93 coordinates heme b. The residue at position 94 (Cys94) is an S-nitrosocysteine. Ser140 is subject to Phosphoserine.

The protein belongs to the globin family. Heterotetramer of two alpha chains and two gamma chains in fetal hemoglobin (Hb F). Red blood cells.

Gamma chains make up the fetal hemoglobin F, in combination with alpha chains. The polypeptide is Hemoglobin subunit gamma-1 (HBG1) (Sapajus apella (Brown-capped capuchin)).